The chain runs to 154 residues: Metallothiol transferase FosB (154 aa).

A VOC domain is found at 8-123; sequence GINHLLFSVS…DGHKFELHTG (116 aa). Positions 11, 70, and 119 each coordinate Mg(2+). The Proton donor/acceptor role is filled by Glu-119.

This sequence belongs to the fosfomycin resistance protein family. FosB subfamily. As to quaternary structure, homodimer. Mg(2+) serves as cofactor.

The protein localises to the cytoplasm. In terms of biological role, metallothiol transferase which confers resistance to fosfomycin by catalyzing the addition of a thiol cofactor to fosfomycin. L-cysteine is probably the physiological thiol donor. The sequence is that of Metallothiol transferase FosB from Bacillus licheniformis (strain ATCC 14580 / DSM 13 / JCM 2505 / CCUG 7422 / NBRC 12200 / NCIMB 9375 / NCTC 10341 / NRRL NRS-1264 / Gibson 46).